Consider the following 454-residue polypeptide: Cobyrinate a,c-diamide synthase (454 aa).

The GATase cobBQ-type domain maps to 244-440 (RLGIAKDKAF…LHVHFYQNPK (197 aa)). C326 (nucleophile) is an active-site residue.

It belongs to the CobB/CbiA family. Mg(2+) is required as a cofactor.

The catalysed reaction is cob(II)yrinate + 2 L-glutamine + 2 ATP + 2 H2O = cob(II)yrinate a,c diamide + 2 L-glutamate + 2 ADP + 2 phosphate + 2 H(+). The protein operates within cofactor biosynthesis; adenosylcobalamin biosynthesis; cob(II)yrinate a,c-diamide from sirohydrochlorin (anaerobic route): step 10/10. In terms of biological role, catalyzes the ATP-dependent amidation of the two carboxylate groups at positions a and c of cobyrinate, using either L-glutamine or ammonia as the nitrogen source. This Limosilactobacillus reuteri subsp. reuteri (strain JCM 1112) (Lactobacillus reuteri) protein is Cobyrinate a,c-diamide synthase.